A 153-amino-acid polypeptide reads, in one-letter code: Mediator of RNA polymerase II transcription subunit 22 (153 aa).

This sequence belongs to the Mediator complex subunit 22 family. In terms of assembly, component of the Mediator complex.

It is found in the nucleus. In terms of biological role, component of the Mediator complex, a coactivator involved in the regulated transcription of nearly all RNA polymerase II-dependent genes. Mediator functions as a bridge to convey information from gene-specific regulatory proteins to the basal RNA polymerase II transcription machinery. Mediator is recruited to promoters by direct interactions with regulatory proteins and serves as a scaffold for the assembly of a functional preinitiation complex with RNA polymerase II and the general transcription factors. The chain is Mediator of RNA polymerase II transcription subunit 22 (mdt-22) from Caenorhabditis briggsae.